The primary structure comprises 293 residues: Ribonuclease HIII (293 aa).

In terms of domain architecture, RNase H type-2 spans 78 to 293 (LPLIGTDEVG…TEKAKKRLER (216 aa)). Positions 84, 85, and 187 each coordinate a divalent metal cation.

It belongs to the RNase HII family. RnhC subfamily. It depends on Mn(2+) as a cofactor. The cofactor is Mg(2+).

It is found in the cytoplasm. The catalysed reaction is Endonucleolytic cleavage to 5'-phosphomonoester.. Its function is as follows. Endonuclease that specifically degrades the RNA of RNA-DNA hybrids. In Streptococcus pneumoniae serotype 4 (strain ATCC BAA-334 / TIGR4), this protein is Ribonuclease HIII (rnhC).